Reading from the N-terminus, the 162-residue chain is Phosphopantetheine adenylyltransferase (162 aa).

Ser-11 serves as a coordination point for substrate. Residues 11–12 (SF) and His-19 contribute to the ATP site. 3 residues coordinate substrate: Lys-43, Val-76, and Arg-90. ATP contacts are provided by residues 91 to 93 (GLR), Glu-101, and 126 to 132 (HLYISSS).

Belongs to the bacterial CoaD family. Homohexamer. Mg(2+) serves as cofactor.

The protein resides in the cytoplasm. The enzyme catalyses (R)-4'-phosphopantetheine + ATP + H(+) = 3'-dephospho-CoA + diphosphate. The protein operates within cofactor biosynthesis; coenzyme A biosynthesis; CoA from (R)-pantothenate: step 4/5. Reversibly transfers an adenylyl group from ATP to 4'-phosphopantetheine, yielding dephospho-CoA (dPCoA) and pyrophosphate. This chain is Phosphopantetheine adenylyltransferase, found in Streptococcus pneumoniae (strain 70585).